A 539-amino-acid polypeptide reads, in one-letter code: MSWKVVIIFSLLITPQHGLKESYLEESCSTITEGYLSVLRTGWYTNVFTLEVGDVENLTCSDGPSLIKTELDLTKSALRELKTVSADQLAREEQIENPRQSRFVLGAIALGVATAAAVTAGVAIAKTIRLESEVTAIKNALKTTNEAVSTLGNGVRVLATAVRELKDFVSKNLTRAINKNKCDIDDLKMAVSFSQFNRRFLNVVRQFSDNAGITPAISLDLMTDAELARAVSNMPTSAGQIKLMLENRAMVRRKGFGILIGVYGSSVIYMVQLPIFGVIDTPCWIVKAAPSCSGKKGNYACLLREDQGWYCQNAGSTVYYPNEKDCETRGDHVFCDTAAGINVAEQSKECNINISTTNYPCKVSTGRHPISMVALSPLGALVACYKGVSCSIGSNRVGIIKQLNKGCSYITNQDADTVTIDNTVYQLSKVEGEQHVIKGRPVSSSFDPIKFPEDQFNVALDQVFENIENSQALVDQSNRILSSAEKGNTGFIIVIILIAVLGSSMILVSIFIIIKKTKKPTGAPPELSGVTNNGFIPHS.

A signal peptide spans 1–18; sequence MSWKVVIIFSLLITPQHG. 7 disulfide bridges follow: Cys28/Cys407, Cys60/Cys182, Cys283/Cys311, Cys292/Cys301, Cys326/Cys335, Cys350/Cys361, and Cys384/Cys390. Residue Asn57 is glycosylated (N-linked (GlcNAc...) asparagine; by host). The fusion peptide stretch occupies residues 103–127; the sequence is FVLGAIALGVATAAAVTAGVAIAKT. Asn172 carries N-linked (GlcNAc...) asparagine; by host glycosylation. Positions 329–331 match the Cell attachment site motif; sequence RGD. Asn353 is a glycosylation site (N-linked (GlcNAc...) asparagine; by host). The chain crosses the membrane as a helical span at residues 492 to 512; that stretch reads IIVIILIAVLGSSMILVSIFI. Residues 520–539 are disordered; it reads PTGAPPELSGVTNNGFIPHS. Over residues 529–539 the composition is skewed to polar residues; the sequence is GVTNNGFIPHS.

The protein belongs to the paramyxoviruses fusion glycoprotein family. As to quaternary structure, homotrimer. Heterodimer with fusion protein F2; disulfide-linked. As a heterodimer with F2, interacts with host heparan sulfate. As a heterodimer with F2, interacts with host integrin ITGAV/ITGB1. Part of a complex composed of F1, F2 and G glycoproteins. In terms of assembly, homotrimer. Heterodimer with fusion protein F1; disulfide-linked. As a heterodimer with F1, interacts with host heparan sulfate. As a heterodimer with F2, interacts with host integrin ITGAV/ITGB1. Part of a complex composed of F1, F2 and G glycoproteins. The F glycoprotein is synthesized as a F0 inactive precursor that is heavily N-glycosylated and processed.

The protein resides in the virion membrane. Its subcellular location is the host cell membrane. Its function is as follows. Inactive precursor that is cleaved to give rise to the mature F1 and F2 fusion glycoproteins. In terms of biological role, class I viral fusion protein. Under the current model, the protein has at least 3 conformational states: pre-fusion native state, pre-hairpin intermediate state, and post-fusion hairpin state. During viral and plasma cell membrane fusion, the coiled coil regions assume a trimer-of-hairpins structure, positioning the fusion peptide in close proximity to the C-terminal region of the ectodomain. The formation of this structure appears to drive apposition and subsequent fusion of viral and cellular membranes leading to delivery of the nucleocapsid into the cytoplasm. This fusion is pH independent and occurs at the plasma or endosomal membrane. The trimer of F1-F2 (F protein) also facilitates the attachment to host cell by binding to host heparan sulfate. Major determinant of the species specificity of RSV infection. The trimer of F1-F2 (F protein) also facilitates the attachment to host cell by binding to host heparan sulfate. The protein is Fusion glycoprotein F0 (F) of Human metapneumovirus (strain CAN97-83) (HMPV).